Here is a 149-residue protein sequence, read N- to C-terminus: Transcriptional regulator MraZ (149 aa).

SpoVT-AbrB domains lie at 7-54 and 83-126; these read KYVN…GISH and AVQL…QPQN.

This sequence belongs to the MraZ family. As to quaternary structure, forms oligomers.

It is found in the cytoplasm. It localises to the nucleoid. This chain is Transcriptional regulator MraZ, found in Rickettsia rickettsii (strain Sheila Smith).